The sequence spans 317 residues: Ferrochelatase (317 aa).

Fe cation contacts are provided by His192 and Glu271.

Belongs to the ferrochelatase family.

It localises to the cytoplasm. The enzyme catalyses heme b + 2 H(+) = protoporphyrin IX + Fe(2+). The protein operates within porphyrin-containing compound metabolism; protoheme biosynthesis; protoheme from protoporphyrin-IX: step 1/1. Its function is as follows. Catalyzes the ferrous insertion into protoporphyrin IX. This Geobacter sp. (strain M21) protein is Ferrochelatase.